Here is a 97-residue protein sequence, read N- to C-terminus: Intermembrane phospholipid transport system binding protein MlaB (97 aa).

The STAS domain occupies 1 to 97 (MSESLSWMQT…YNLPADVLPR (97 aa)).

In terms of assembly, the complex is composed of two ATP-binding proteins (MlaF), two transmembrane proteins (MlaE), two cytoplasmic solute-binding proteins (MlaB) and six periplasmic solute-binding proteins (MlaD).

Its subcellular location is the cytoplasm. Part of the ABC transporter complex MlaFEDB, which is involved in a phospholipid transport pathway that maintains lipid asymmetry in the outer membrane by retrograde trafficking of phospholipids from the outer membrane to the inner membrane. MlaB plays critical roles in both the assembly and activity of the complex. May act by modulating MlaF structure and stability. The polypeptide is Intermembrane phospholipid transport system binding protein MlaB (Escherichia coli (strain K12)).